A 349-amino-acid chain; its full sequence is Fructose-1,6-bisphosphatase class 1 (349 aa).

Mg(2+)-binding residues include E113, D135, I137, and D138. Substrate contacts are provided by residues 138 to 141 (DGSS), N230, Y258, and K288. A Mg(2+)-binding site is contributed by E294.

It belongs to the FBPase class 1 family. Homotetramer. Mg(2+) is required as a cofactor.

It is found in the cytoplasm. It carries out the reaction beta-D-fructose 1,6-bisphosphate + H2O = beta-D-fructose 6-phosphate + phosphate. It functions in the pathway carbohydrate biosynthesis; Calvin cycle. This Nostoc punctiforme (strain ATCC 29133 / PCC 73102) protein is Fructose-1,6-bisphosphatase class 1.